Reading from the N-terminus, the 690-residue chain is Elongation factor G (690 aa).

The tr-type G domain occupies 8 to 283 (EDYRNFGIMA…AVVDYLPSPV (276 aa)). Residues 17–24 (AHIDAGKT), 81–85 (DTPGH), and 135–138 (NKMD) contribute to the GTP site.

Belongs to the TRAFAC class translation factor GTPase superfamily. Classic translation factor GTPase family. EF-G/EF-2 subfamily.

It localises to the cytoplasm. In terms of biological role, catalyzes the GTP-dependent ribosomal translocation step during translation elongation. During this step, the ribosome changes from the pre-translocational (PRE) to the post-translocational (POST) state as the newly formed A-site-bound peptidyl-tRNA and P-site-bound deacylated tRNA move to the P and E sites, respectively. Catalyzes the coordinated movement of the two tRNA molecules, the mRNA and conformational changes in the ribosome. The chain is Elongation factor G from Rhodopseudomonas palustris (strain BisB18).